Reading from the N-terminus, the 167-residue chain is SsrA-binding protein (167 aa).

The disordered stretch occupies residues 137–167 (GKQSHDKRDAAKERDWQRDKQRVMRRHNRDA). The span at 139–158 (QSHDKRDAAKERDWQRDKQR) shows a compositional bias: basic and acidic residues.

Belongs to the SmpB family.

It is found in the cytoplasm. In terms of biological role, required for rescue of stalled ribosomes mediated by trans-translation. Binds to transfer-messenger RNA (tmRNA), required for stable association of tmRNA with ribosomes. tmRNA and SmpB together mimic tRNA shape, replacing the anticodon stem-loop with SmpB. tmRNA is encoded by the ssrA gene; the 2 termini fold to resemble tRNA(Ala) and it encodes a 'tag peptide', a short internal open reading frame. During trans-translation Ala-aminoacylated tmRNA acts like a tRNA, entering the A-site of stalled ribosomes, displacing the stalled mRNA. The ribosome then switches to translate the ORF on the tmRNA; the nascent peptide is terminated with the 'tag peptide' encoded by the tmRNA and targeted for degradation. The ribosome is freed to recommence translation, which seems to be the essential function of trans-translation. The sequence is that of SsrA-binding protein from Xanthomonas campestris pv. campestris (strain 8004).